The chain runs to 398 residues: Bifunctional enzyme IspD/IspF (398 aa).

Residues 1–234 (MPNPPRTAAI…SRLTALLGDI (234 aa)) form a 2-C-methyl-D-erythritol 4-phosphate cytidylyltransferase region. The segment at 235 to 398 (RTGTGYDVHA…LPWGAEGLAG (164 aa)) is 2-C-methyl-D-erythritol 2,4-cyclodiphosphate synthase. Positions 241 and 243 each coordinate a divalent metal cation. Residues 241 to 243 (DVH) and 267 to 268 (HS) each bind 4-CDP-2-C-methyl-D-erythritol 2-phosphate. H275 is a binding site for a divalent metal cation. Residues 289–291 (DIG), 365–368 (TTSE), F372, and R375 each bind 4-CDP-2-C-methyl-D-erythritol 2-phosphate.

It in the N-terminal section; belongs to the IspD/TarI cytidylyltransferase family. IspD subfamily. This sequence in the C-terminal section; belongs to the IspF family. The cofactor is a divalent metal cation.

The enzyme catalyses 2-C-methyl-D-erythritol 4-phosphate + CTP + H(+) = 4-CDP-2-C-methyl-D-erythritol + diphosphate. It carries out the reaction 4-CDP-2-C-methyl-D-erythritol 2-phosphate = 2-C-methyl-D-erythritol 2,4-cyclic diphosphate + CMP. The protein operates within isoprenoid biosynthesis; isopentenyl diphosphate biosynthesis via DXP pathway; isopentenyl diphosphate from 1-deoxy-D-xylulose 5-phosphate: step 2/6. It functions in the pathway isoprenoid biosynthesis; isopentenyl diphosphate biosynthesis via DXP pathway; isopentenyl diphosphate from 1-deoxy-D-xylulose 5-phosphate: step 4/6. In terms of biological role, bifunctional enzyme that catalyzes the formation of 4-diphosphocytidyl-2-C-methyl-D-erythritol from CTP and 2-C-methyl-D-erythritol 4-phosphate (MEP) (IspD), and catalyzes the conversion of 4-diphosphocytidyl-2-C-methyl-D-erythritol 2-phosphate (CDP-ME2P) to 2-C-methyl-D-erythritol 2,4-cyclodiphosphate (ME-CPP) with a corresponding release of cytidine 5-monophosphate (CMP) (IspF). In Rhodopseudomonas palustris (strain BisB5), this protein is Bifunctional enzyme IspD/IspF.